A 167-amino-acid chain; its full sequence is Peptidyl-prolyl cis-trans isomerase-like 3 (167 aa).

The region spanning 1-160 (MSVTLHTTLG…EEVRIERVTV (160 aa)) is the PPIase cyclophilin-type domain.

Belongs to the cyclophilin-type PPIase family. PPIL3 subfamily.

The catalysed reaction is [protein]-peptidylproline (omega=180) = [protein]-peptidylproline (omega=0). In terms of biological role, PPIases accelerate the folding of proteins. It catalyzes the cis-trans isomerization of proline imidic peptide bonds in oligopeptides. In Neurospora crassa (strain ATCC 24698 / 74-OR23-1A / CBS 708.71 / DSM 1257 / FGSC 987), this protein is Peptidyl-prolyl cis-trans isomerase-like 3 (cyp-10).